The primary structure comprises 452 residues: Prenyltransferase fsdK (452 aa).

It belongs to the tryptophan dimethylallyltransferase family.

Its pathway is mycotoxin biosynthesis. In terms of biological role, prenyltransferase; part of the gene cluster that mediates the biosynthesis of fusaridione A, a bright yellow trans-fused decalin-containing tetramic acid with antimicrobial activity. The PKS module of fsdS catalyzes the formation of the polyketide unit which is then conjugated to L-tyrosine by the condensation domain of the fsdS NRPS module. Activity of the Dieckmann cyclase domain (RED) results in release of the intermediate fusaridione A. The unstable pyrrolidinedione ring of fusaridione A is opened through a reverse-Dieckmann reaction to afford its ring-opened form. The protein is Prenyltransferase fsdK of Fusarium heterosporum.